Consider the following 482-residue polypeptide: UDP-N-acetylmuramoyl-L-alanyl-D-glutamate--2,6-diaminopimelate ligase 1 (482 aa).

Serine 30 is a UDP-N-acetyl-alpha-D-muramoyl-L-alanyl-D-glutamate binding site. 110–116 serves as a coordination point for ATP; the sequence is GTNGKTT. UDP-N-acetyl-alpha-D-muramoyl-L-alanyl-D-glutamate is bound by residues 152-153, serine 179, and arginine 187; that span reads TT. Lysine 219 carries the post-translational modification N6-carboxylysine. Meso-2,6-diaminopimelate contacts are provided by residues arginine 378, 402–405, glycine 452, and glutamate 456; that span reads DNPR. The Meso-diaminopimelate recognition motif signature appears at 402–405; sequence DNPR.

Belongs to the MurCDEF family. MurE subfamily. Requires Mg(2+) as cofactor. Carboxylation is probably crucial for Mg(2+) binding and, consequently, for the gamma-phosphate positioning of ATP.

It localises to the cytoplasm. It carries out the reaction UDP-N-acetyl-alpha-D-muramoyl-L-alanyl-D-glutamate + meso-2,6-diaminopimelate + ATP = UDP-N-acetyl-alpha-D-muramoyl-L-alanyl-gamma-D-glutamyl-meso-2,6-diaminopimelate + ADP + phosphate + H(+). The protein operates within cell wall biogenesis; peptidoglycan biosynthesis. Catalyzes the addition of meso-diaminopimelic acid to the nucleotide precursor UDP-N-acetylmuramoyl-L-alanyl-D-glutamate (UMAG) in the biosynthesis of bacterial cell-wall peptidoglycan. This is UDP-N-acetylmuramoyl-L-alanyl-D-glutamate--2,6-diaminopimelate ligase 1 from Clostridium acetobutylicum (strain ATCC 824 / DSM 792 / JCM 1419 / IAM 19013 / LMG 5710 / NBRC 13948 / NRRL B-527 / VKM B-1787 / 2291 / W).